Reading from the N-terminus, the 85-residue chain is Polcalcin Aln g 4 (85 aa).

2 consecutive EF-hand domains span residues 7-42 (QDQA…LGSV) and 45-77 (DEVK…NRGL). The Ca(2+) site is built by D20, N22, D24, K26, E31, D55, D57, D59, and E66.

In Alnus glutinosa (European alder), this protein is Polcalcin Aln g 4.